We begin with the raw amino-acid sequence, 420 residues long: Zinc finger and BTB domain-containing protein 42 (420 aa).

In terms of domain architecture, BTB spans 24–92 (CDCTVLVGDA…MYEGRLDLHN (69 aa)). Disordered regions lie at residues 127-204 (TRTL…HPPC) and 222-247 (VKAE…PPPV). Over residues 227-241 (DSFSEQDSSSPQSAD) the composition is skewed to low complexity. 4 consecutive C2H2-type zinc fingers follow at residues 292–314 (CICP…LSAH), 332–354 (PTCP…ERTH), 360–382 (YTCV…AVVH), and 388–411 (HACR…RKFH).

Belongs to the krueppel C2H2-type zinc-finger protein family. ZBTB18 subfamily. In terms of tissue distribution, highly expressed in skeletal muscle and ovary (at protein level). Low expression in brain, lung, spleen, liver and heart (at protein level). Not detected in kidney and intestines (at protein level). Also observed in testis and, at lower levels, in stomach and nervous system.

Its subcellular location is the cytoplasm. It is found in the nucleus. The protein localises to the nucleoplasm. Functionally, transcriptional repressor. Specifically binds DNA and probably acts by recruiting chromatin remodeling multiprotein complexes. The chain is Zinc finger and BTB domain-containing protein 42 (Zbtb42) from Mus musculus (Mouse).